Consider the following 343-residue polypeptide: Heat-inducible transcription repressor HrcA (343 aa).

It belongs to the HrcA family.

Functionally, negative regulator of class I heat shock genes (grpE-dnaK-dnaJ and groELS operons). Prevents heat-shock induction of these operons. The sequence is that of Heat-inducible transcription repressor HrcA from Caldanaerobacter subterraneus subsp. tengcongensis (strain DSM 15242 / JCM 11007 / NBRC 100824 / MB4) (Thermoanaerobacter tengcongensis).